We begin with the raw amino-acid sequence, 394 residues long: NAC domain-containing protein 26 (394 aa).

The NAC domain occupies 7–156; that stretch reads VPPGFRFHPT…GWVVCRVFKK (150 aa). A DNA-binding region spans residues 107-162; it reads IGMRKTLVFYKGRAPNGQKSDWIMHEYRLETSENGTPQEEGWVVCRVFKKKLAATV.

It belongs to the plant vascular related NAC-domain protein family. Interacts with NAC083/VNI2. Detected in root vessels of protoxylems, outermost metaxylems, inner metaxylems, shoots and hypocotyls. Expressed in roots, hypocotyls, cotyledons and leaves. Expressed in developing xylems. Specifically expressed in vessels in the secondary xylem of the root-hypocotyl region, and in vessels but not in interfascicular fibers in stems.

Its subcellular location is the nucleus. Transcription activator that binds to the secondary wall NAC binding element (SNBE), 5'-(T/A)NN(C/T)(T/C/G)TNNNNNNNA(A/C)GN(A/C/T)(A/T)-3', in the promoter of target genes. Involved in xylem formation by promoting the expression of secondary wall-associated transcription factors and of genes involved in secondary wall biosynthesis and programmed cell death, genes driven by the secondary wall NAC binding element (SNBE). Triggers thickening of secondary walls. The sequence is that of NAC domain-containing protein 26 from Arabidopsis thaliana (Mouse-ear cress).